Here is an 868-residue protein sequence, read N- to C-terminus: LPS-assembly protein LptD (868 aa).

Positions 1-24 (MLKGIHKYLLMCFGTVLFTVQANA) are cleaved as a signal peptide.

This sequence belongs to the LptD family. Component of the lipopolysaccharide transport and assembly complex. Interacts with LptE and LptA.

The protein resides in the cell outer membrane. Its function is as follows. Together with LptE, is involved in the assembly of lipopolysaccharide (LPS) at the surface of the outer membrane. This Francisella tularensis subsp. holarctica (strain LVS) protein is LPS-assembly protein LptD.